We begin with the raw amino-acid sequence, 161 residues long: Cyclic pyranopterin monophosphate synthase (161 aa).

Residues 75 to 77 (LCH) and 113 to 114 (ME) contribute to the substrate site. Aspartate 128 is an active-site residue.

The protein belongs to the MoaC family. In terms of assembly, homohexamer; trimer of dimers.

The enzyme catalyses (8S)-3',8-cyclo-7,8-dihydroguanosine 5'-triphosphate = cyclic pyranopterin phosphate + diphosphate. It functions in the pathway cofactor biosynthesis; molybdopterin biosynthesis. In terms of biological role, catalyzes the conversion of (8S)-3',8-cyclo-7,8-dihydroguanosine 5'-triphosphate to cyclic pyranopterin monophosphate (cPMP). This chain is Cyclic pyranopterin monophosphate synthase, found in Citrobacter koseri (strain ATCC BAA-895 / CDC 4225-83 / SGSC4696).